Here is a 194-residue protein sequence, read N- to C-terminus: Putative manganese efflux pump MntP (194 aa).

Transmembrane regions (helical) follow at residues 3–23 (PITILLIGIAMSTDAFAAAIG), 37–57 (LYVAVIFGVIETATPIAGWLL), 65–85 (IATFDHWIAFGLLSGLGIHMI), 112–132 (LAATALATSIDAAAIGISLAF), 139–159 (IVAAVIGLCTFTMVIFGVMLG), and 170–190 (AEIVGGIILIIVGSTILYEHL).

It belongs to the MntP (TC 9.B.29) family.

It localises to the cell inner membrane. Probably functions as a manganese efflux pump. This is Putative manganese efflux pump MntP from Xylella fastidiosa (strain 9a5c).